A 257-amino-acid chain; its full sequence is tRNA pseudouridine synthase A (257 aa).

The Nucleophile role is filled by Asp52. Residue Tyr111 participates in substrate binding.

The protein belongs to the tRNA pseudouridine synthase TruA family. In terms of assembly, homodimer.

The enzyme catalyses uridine(38/39/40) in tRNA = pseudouridine(38/39/40) in tRNA. In terms of biological role, formation of pseudouridine at positions 38, 39 and 40 in the anticodon stem and loop of transfer RNAs. The chain is tRNA pseudouridine synthase A from Cereibacter sphaeroides (strain ATCC 17025 / ATH 2.4.3) (Rhodobacter sphaeroides).